The chain runs to 295 residues: Cutinase 11 (295 aa).

Residues 1-17 (MQTSALLLAAQALVASA) form the signal peptide. Cysteines 25 and 102 form a disulfide. Residues Ser113, Asp198, and His210 contribute to the active site. A disulfide bridge connects residues Cys184 and Cys202. Residues 228–258 (KLNSGGSPPTTPPTTPPTTPPTTPPTTPPPS) are disordered. A compositionally biased stretch (pro residues) spans 236 to 258 (PTTPPTTPPTTPPTTPPTTPPPS). A CBM1 domain is found at 260 to 295 (SCAALYGQCGGQGWNGATCCSQGTCRASNQWYSQCL).

The protein belongs to the cutinase family. The 2 disulfide bonds play a critical role in holding the catalytic residues in juxta-position; reduction of the disulfide bridges results in the complete inactivation of the enzyme.

It localises to the secreted. It carries out the reaction cutin + H2O = cutin monomers.. Catalyzes the hydrolysis of complex carboxylic polyesters found in the cell wall of plants. May degrade cutin, a macromolecule that forms the structure of the plant cuticle. May also degrade suberin, a specialized macromolecule found in the cell wall of various plant tissues. Allows pathogenic fungi to penetrate through the cuticular barrier into the host plant during the initial stage of fungal infection. Involved in pathogenesis. The polypeptide is Cutinase 11 (Verticillium dahliae (Verticillium wilt)).